A 287-amino-acid chain; its full sequence is Ribosomal RNA small subunit methyltransferase I (287 aa).

This sequence belongs to the methyltransferase superfamily. RsmI family.

The protein localises to the cytoplasm. It catalyses the reaction cytidine(1402) in 16S rRNA + S-adenosyl-L-methionine = 2'-O-methylcytidine(1402) in 16S rRNA + S-adenosyl-L-homocysteine + H(+). Functionally, catalyzes the 2'-O-methylation of the ribose of cytidine 1402 (C1402) in 16S rRNA. This chain is Ribosomal RNA small subunit methyltransferase I, found in Streptococcus pyogenes serotype M1.